The primary structure comprises 133 residues: Ribosome-binding factor A (133 aa).

Belongs to the RbfA family. Monomer. Binds 30S ribosomal subunits, but not 50S ribosomal subunits or 70S ribosomes.

The protein localises to the cytoplasm. In terms of biological role, one of several proteins that assist in the late maturation steps of the functional core of the 30S ribosomal subunit. Associates with free 30S ribosomal subunits (but not with 30S subunits that are part of 70S ribosomes or polysomes). Required for efficient processing of 16S rRNA. May interact with the 5'-terminal helix region of 16S rRNA. This chain is Ribosome-binding factor A, found in Citrobacter koseri (strain ATCC BAA-895 / CDC 4225-83 / SGSC4696).